The chain runs to 144 residues: MKLNELMPSEGSRTNRKRIGRGTSSGTGKTAGRGQKGQKARGKVRLGFEGGQMPLYRRIPKRGFTNINRKEFAIVNLDALNVFDEGAEVTPESLLKAGIISKQLSGVKVLGNGEITKKLTVKANKFSESAVKAIEAAGGKTEVI.

The tract at residues 1–44 (MKLNELMPSEGSRTNRKRIGRGTSSGTGKTAGRGQKGQKARGKV) is disordered. A compositionally biased stretch (gly residues) spans 23–35 (TSSGTGKTAGRGQ).

This sequence belongs to the universal ribosomal protein uL15 family. As to quaternary structure, part of the 50S ribosomal subunit.

Binds to the 23S rRNA. In Pediococcus pentosaceus (strain ATCC 25745 / CCUG 21536 / LMG 10740 / 183-1w), this protein is Large ribosomal subunit protein uL15.